A 266-amino-acid chain; its full sequence is Probable phosphoadenosine phosphosulfate reductase (266 aa).

Residues 219–246 (TQPVREGEDERAGRWRGREKTECGLHSH) are disordered. Basic and acidic residues predominate over residues 223–243 (REGEDERAGRWRGREKTECGL).

It belongs to the PAPS reductase family. CysH subfamily.

It is found in the cytoplasm. Its subcellular location is the nucleus. The catalysed reaction is [thioredoxin]-disulfide + sulfite + adenosine 3',5'-bisphosphate + 2 H(+) = [thioredoxin]-dithiol + 3'-phosphoadenylyl sulfate. It functions in the pathway sulfur metabolism; hydrogen sulfide biosynthesis; sulfite from sulfate: step 3/3. Functionally, the NADP dependent reduction of PAPS into sulfite involves thioredoxin which probably plays the role of a thiol carrier. Required for methionine synthesis. The protein is Probable phosphoadenosine phosphosulfate reductase (met16) of Schizosaccharomyces pombe (strain 972 / ATCC 24843) (Fission yeast).